The chain runs to 191 residues: MLSALGGNLSNARQSIAQVLNFALVLSTAFMLWKGVSIASNSSSPIVVVLSGSMEPAFQRGDLLFLWNRAERTEVGEIVVYNVRGRDIPIVHRVVRSYTEEDKKLKAKNKKAGLPTVAPQKLLTKGDNNLADDTELYARGQDFLDRKEDIIGSVRGYIPGVGYVTIMLSEHPWLKTVLLGVMGLMVILQRE.

Topologically, residues 1-18 are cytoplasmic; it reads MLSALGGNLSNARQSIAQ. The chain crosses the membrane as a helical; Signal-anchor for type II membrane protein span at residues 19-39; the sequence is VLNFALVLSTAFMLWKGVSIA. The Lumenal segment spans residues 40 to 191; that stretch reads SNSSSPIVVV…MGLMVILQRE (152 aa). Asparagine 41 is a glycosylation site (N-linked (GlcNAc...) asparagine). Active-site charge relay system residues include serine 53, histidine 92, and aspartate 133. Residues 177–188 are C-terminal short (CTS) helix; sequence VLLGVMGLMVIL.

Belongs to the peptidase S26B family. As to quaternary structure, component of the signal peptidase complex (SPC) composed of a catalytic subunit SEC11 and three accessory subunits SPC1, SPC2 and SPC3. The complex induces a local thinning of the ER membrane which is used to measure the length of the signal peptide (SP) h-region of protein substrates. This ensures the selectivity of the complex towards h-regions shorter than 18-20 amino acids. SPC associates with the translocon complex.

It localises to the endoplasmic reticulum membrane. The catalysed reaction is Cleavage of hydrophobic, N-terminal signal or leader sequences from secreted and periplasmic proteins.. In terms of biological role, catalytic component of the signal peptidase complex (SPC) which catalyzes the cleavage of N-terminal signal sequences from nascent proteins as they are translocated into the lumen of the endoplasmic reticulum. Specifically cleaves N-terminal signal peptides that contain a hydrophobic alpha-helix (h-region) shorter than 18-20 amino acids. In Talaromyces marneffei (strain ATCC 18224 / CBS 334.59 / QM 7333) (Penicillium marneffei), this protein is Signal peptidase complex catalytic subunit sec11 (sec11).